We begin with the raw amino-acid sequence, 628 residues long: ATP-dependent zinc metalloprotease FtsH (628 aa).

Topologically, residues 1–7 (MKLSWKT) are stromal. The helical transmembrane segment at 8 to 28 (LLLWSLPIFVVGFFFWQGFLG) threads the bilayer. The Lumenal segment spans residues 29–118 (PTTTDVGSNI…AHPPKSTSAV (90 aa)). The helical transmembrane segment at 119–139 (WGLLGNLLFPLILVGGLAFLF) threads the bilayer. At 140–628 (RRSNNASGGP…PEKNYYISQF (489 aa)) the chain is on the stromal side. Residue 213–220 (GPPGTGKT) participates in ATP binding. A Zn(2+)-binding site is contributed by His434. Glu435 is a catalytic residue. Residues His438 and Asp512 each contribute to the Zn(2+) site.

The protein in the central section; belongs to the AAA ATPase family. This sequence in the C-terminal section; belongs to the peptidase M41 family. Homohexamer. It depends on Zn(2+) as a cofactor.

The protein localises to the plastid. It localises to the chloroplast thylakoid membrane. Its function is as follows. Acts as a processive, ATP-dependent zinc metallopeptidase. This is ATP-dependent zinc metalloprotease FtsH from Porphyra purpurea (Red seaweed).